Consider the following 379-residue polypeptide: Queuine tRNA-ribosyltransferase (379 aa).

Aspartate 96 acts as the Proton acceptor in catalysis. Substrate-binding positions include aspartate 96–phenylalanine 100, aspartate 150, glutamine 196, and glycine 223. The interval glycine 254–tyrosine 260 is RNA binding. Aspartate 273 serves as the catalytic Nucleophile. Positions 311, 313, 316, and 342 each coordinate Zn(2+).

Belongs to the queuine tRNA-ribosyltransferase family. As to quaternary structure, homodimer. Within each dimer, one monomer is responsible for RNA recognition and catalysis, while the other monomer binds to the replacement base PreQ1. It depends on Zn(2+) as a cofactor.

It carries out the reaction 7-aminomethyl-7-carbaguanine + guanosine(34) in tRNA = 7-aminomethyl-7-carbaguanosine(34) in tRNA + guanine. It functions in the pathway tRNA modification; tRNA-queuosine biosynthesis. Functionally, catalyzes the base-exchange of a guanine (G) residue with the queuine precursor 7-aminomethyl-7-deazaguanine (PreQ1) at position 34 (anticodon wobble position) in tRNAs with GU(N) anticodons (tRNA-Asp, -Asn, -His and -Tyr). Catalysis occurs through a double-displacement mechanism. The nucleophile active site attacks the C1' of nucleotide 34 to detach the guanine base from the RNA, forming a covalent enzyme-RNA intermediate. The proton acceptor active site deprotonates the incoming PreQ1, allowing a nucleophilic attack on the C1' of the ribose to form the product. After dissociation, two additional enzymatic reactions on the tRNA convert PreQ1 to queuine (Q), resulting in the hypermodified nucleoside queuosine (7-(((4,5-cis-dihydroxy-2-cyclopenten-1-yl)amino)methyl)-7-deazaguanosine). This is Queuine tRNA-ribosyltransferase from Treponema denticola (strain ATCC 35405 / DSM 14222 / CIP 103919 / JCM 8153 / KCTC 15104).